Consider the following 95-residue polypeptide: Small integral membrane protein 18 (95 aa).

Residues 35–55 (CFVILLLFIFTVVSLVVLAFL) traverse the membrane as a helical segment.

It is found in the membrane. In Homo sapiens (Human), this protein is Small integral membrane protein 18 (SMIM18).